Consider the following 190-residue polypeptide: Potassium-transporting ATPase KdpC subunit (190 aa).

The chain crosses the membrane as a helical span at residues 9 to 29 (VMFILFTIICGGIYPSVVTGI).

This sequence belongs to the KdpC family. As to quaternary structure, the system is composed of three essential subunits: KdpA, KdpB and KdpC.

Its subcellular location is the cell inner membrane. Its function is as follows. Part of the high-affinity ATP-driven potassium transport (or Kdp) system, which catalyzes the hydrolysis of ATP coupled with the electrogenic transport of potassium into the cytoplasm. This subunit acts as a catalytic chaperone that increases the ATP-binding affinity of the ATP-hydrolyzing subunit KdpB by the formation of a transient KdpB/KdpC/ATP ternary complex. The polypeptide is Potassium-transporting ATPase KdpC subunit (Citrifermentans bemidjiense (strain ATCC BAA-1014 / DSM 16622 / JCM 12645 / Bem) (Geobacter bemidjiensis)).